A 257-amino-acid polypeptide reads, in one-letter code: Phosphate import ATP-binding protein PstB (257 aa).

The ABC transporter domain maps to 11–252 (IQVRDLNFYY…PAKKQTEDYI (242 aa)). 43 to 50 (GPSGSGKS) is a binding site for ATP.

The protein belongs to the ABC transporter superfamily. Phosphate importer (TC 3.A.1.7) family. In terms of assembly, the complex is composed of two ATP-binding proteins (PstB), two transmembrane proteins (PstC and PstA) and a solute-binding protein (PstS).

It localises to the cell inner membrane. The catalysed reaction is phosphate(out) + ATP + H2O = ADP + 2 phosphate(in) + H(+). Part of the ABC transporter complex PstSACB involved in phosphate import. Responsible for energy coupling to the transport system. The sequence is that of Phosphate import ATP-binding protein PstB from Salmonella choleraesuis (strain SC-B67).